The following is a 77-amino-acid chain: MTFEEAMNRLNEIVERLERGNVGLEESLALFEEGLKLHRFCSEKLKELELKLVEVQEDEAGEVTFEEIVEMEDDLPF.

It belongs to the XseB family. Heterooligomer composed of large and small subunits.

The protein resides in the cytoplasm. The catalysed reaction is Exonucleolytic cleavage in either 5'- to 3'- or 3'- to 5'-direction to yield nucleoside 5'-phosphates.. Bidirectionally degrades single-stranded DNA into large acid-insoluble oligonucleotides, which are then degraded further into small acid-soluble oligonucleotides. In Carboxydothermus hydrogenoformans (strain ATCC BAA-161 / DSM 6008 / Z-2901), this protein is Exodeoxyribonuclease 7 small subunit.